A 135-amino-acid chain; its full sequence is Lysozyme 2 (135 aa).

The first 18 residues, 1 to 18 (MNFLILFCVVASASVVYS), serve as a signal peptide directing secretion. The 117-residue stretch at 19–135 (SISDQCLRCI…WRLVQAKGCS (117 aa)) folds into the I-type lysozyme domain. 6 cysteine pairs are disulfide-bonded: Cys-24–Cys-100, Cys-29–Cys-35, Cys-40–Cys-49, Cys-62–Cys-82, Cys-72–Cys-78, and Cys-96–Cys-114. Glu-32 functions as the Proton donor in the catalytic mechanism. The active-site Nucleophile is Asp-43. Substrate is bound at residue 55-61 (KQGYWTD). Substrate contacts are provided by residues Tyr-86 and 107-109 (HNG).

In terms of tissue distribution, expressed in the epithelia of the basophil cells in the digestive tubules, but not in the epithelial cells lining the digestive ducts and stomach. Expressed at a much lower level in the style sac-midgut tissues. No expression detected in mantle, gills, labial palps or hemocytes.

The protein localises to the secreted. It carries out the reaction Hydrolysis of (1-&gt;4)-beta-linkages between N-acetylmuramic acid and N-acetyl-D-glucosamine residues in a peptidoglycan and between N-acetyl-D-glucosamine residues in chitodextrins.. With respect to regulation, activity decreased by 80% by addition of 0.01 M calcium, zinc or magnesium. Activity only decreased by 17% by addition of ammonium, and by 2% by addition of sodium. In terms of biological role, the main role of this lysozyme is in digestion. Has antibacterial activity against the Gram-positive bacterium P.cerevisiae and the Gram-negative bacteria E.coli and V.vulnificus. Shows some chitinase activity but no isopeptidase activity. This is Lysozyme 2 from Crassostrea virginica (Eastern oyster).